We begin with the raw amino-acid sequence, 299 residues long: Probable lipid kinase YegS (299 aa).

Residues 2–133 (AEFPASLLIL…IDMAQVNKQT (132 aa)) form the DAGKc domain. ATP-binding positions include Thr40, 66-72 (GDGTINE), and Thr95. Positions 215, 218, and 220 each coordinate Mg(2+). Glu271 (proton acceptor) is an active-site residue.

Belongs to the diacylglycerol/lipid kinase family. YegS lipid kinase subfamily. It depends on Mg(2+) as a cofactor. The cofactor is Ca(2+).

The protein localises to the cytoplasm. Its function is as follows. Probably phosphorylates lipids; the in vivo substrate is unknown. This Escherichia coli O17:K52:H18 (strain UMN026 / ExPEC) protein is Probable lipid kinase YegS.